The primary structure comprises 141 residues: Large ribosomal subunit protein uL16c (141 aa).

Residues 1–17 are compositionally biased toward basic residues; that stretch reads MLSPKRTKYRKPHRGNR. The segment at 1–21 is disordered; that stretch reads MLSPKRTKYRKPHRGNRKGQA.

This sequence belongs to the universal ribosomal protein uL16 family. Part of the 50S ribosomal subunit.

The protein localises to the plastid. The protein resides in the chloroplast. The protein is Large ribosomal subunit protein uL16c of Ostreococcus tauri.